The sequence spans 509 residues: Heat shock 70 kDa protein 14 (509 aa).

The protein belongs to the heat shock protein 70 family. Component of ribosome-associated complex (RAC), a heterodimer composed of Hsp70/DnaK-type chaperone HSPA14 and Hsp40/DnaJ-type chaperone DNAJC2.

The protein localises to the cytoplasm. It localises to the cytosol. In terms of biological role, component of the ribosome-associated complex (RAC), a complex involved in folding or maintaining nascent polypeptides in a folding-competent state. In the RAC complex, binds to the nascent polypeptide chain, while DNAJC2 stimulates its ATPase activity. The protein is Heat shock 70 kDa protein 14 (HSPA14) of Macaca fascicularis (Crab-eating macaque).